Consider the following 320-residue polypeptide: Methionyl-tRNA formyltransferase (320 aa).

A (6S)-5,6,7,8-tetrahydrofolate-binding site is contributed by 114-117; it reads SLLP.

Belongs to the Fmt family.

It carries out the reaction L-methionyl-tRNA(fMet) + (6R)-10-formyltetrahydrofolate = N-formyl-L-methionyl-tRNA(fMet) + (6S)-5,6,7,8-tetrahydrofolate + H(+). In terms of biological role, attaches a formyl group to the free amino group of methionyl-tRNA(fMet). The formyl group appears to play a dual role in the initiator identity of N-formylmethionyl-tRNA by promoting its recognition by IF2 and preventing the misappropriation of this tRNA by the elongation apparatus. The polypeptide is Methionyl-tRNA formyltransferase (Acinetobacter baumannii (strain SDF)).